We begin with the raw amino-acid sequence, 242 residues long: C-reactive protein 1.1 (242 aa).

The first 24 residues, 1–24 (MKTFHGPTCGTAVSLCLLLFLTSA), serve as a signal peptide directing secretion. The Pentraxin (PTX) domain occupies 30–241 (ITSKVKFPPS…GVVLSPNEIC (212 aa)). Phosphocholine contacts are provided by Thr-60 and Tyr-63. Intrachain disulfides connect Cys-62-Cys-125 and Cys-112-Cys-144. 2 residues coordinate Ca(2+): Asp-85 and Asn-86. A glycan (N-linked (GlcNAc...) asparagine) is linked at Asn-147. 3 residues coordinate Ca(2+): Gln-169, Asp-170, and Gln-180. Cys-207 and Cys-241 are disulfide-bonded.

It belongs to the pentraxin family. As to quaternary structure, homopentamer. Pentraxin (or pentaxin) have a discoid arrangement of 5 non-covalently bound subunits. Ca(2+) serves as cofactor.

The protein localises to the secreted. In terms of biological role, might serve the role of immunoglobulins. This Limulus polyphemus (Atlantic horseshoe crab) protein is C-reactive protein 1.1.